We begin with the raw amino-acid sequence, 687 residues long: Ribonuclease E (687 aa).

Residues 35-117 (GDIYLGVVEN…LTGNITLPGR (83 aa)) enclose the S1 motif domain. Mg(2+) contacts are provided by Asp-296 and Asp-339. The Zn(2+) site is built by Cys-397 and Cys-400. The disordered stretch occupies residues 650-687 (PIKLTETMEESEVNAASTANRRRRRRSSASDSDTGEDS). The short motif at 670 to 678 (RRRRRRSSA) is the C4 Arg-rich motif, necessary and sufficient to confer PNPase binding on another protein element.

Belongs to the RNase E/G family. As to quaternary structure, may form homodimers or higher order multimers. Interacts with polynucleotide phosphorylase (PNPase, pnp) via the C4 Arg-rich motif (residues 670-678). A homotetramer formed by a dimer of dimers. Mg(2+) serves as cofactor. Zn(2+) is required as a cofactor.

It is found in the cytoplasm. It carries out the reaction Endonucleolytic cleavage of single-stranded RNA in A- and U-rich regions.. Functionally, endoribonuclease that plays a central role in rRNA and tRNA processing and mRNA decay. Has been shown to act on 9S rRNA (the precursor of 5S rRNA). This Nostoc sp. (strain PCC 7120 / SAG 25.82 / UTEX 2576) protein is Ribonuclease E.